Reading from the N-terminus, the 217-residue chain is MRVKICGITQPDQGVAIATLGADALGFICVSQSPRYVTPQQIQVVTQALPTQTLKGEPLTRIGVFANAALDLIQQTVEVGQLTGVQLHGDESPEFCQQVKAKLPKVELIKAFRVRSAETLAQITPYEAIANTLLLDAYTPQALGGTGHTWDWTLLKTFTPKLPWFLAGGLTPDNVTPAITTLTPSGIDLSSGVEQSPGNKDLQKVKQLFQQVHTLVI.

Belongs to the TrpF family.

The catalysed reaction is N-(5-phospho-beta-D-ribosyl)anthranilate = 1-(2-carboxyphenylamino)-1-deoxy-D-ribulose 5-phosphate. Its pathway is amino-acid biosynthesis; L-tryptophan biosynthesis; L-tryptophan from chorismate: step 3/5. This is N-(5'-phosphoribosyl)anthranilate isomerase from Acaryochloris marina (strain MBIC 11017).